Reading from the N-terminus, the 152-residue chain is Large ribosomal subunit protein bL34c (152 aa).

A chloroplast-targeting transit peptide spans M1–A91.

As to quaternary structure, component of the chloroplast large ribosomal subunit (LSU). Mature 70S chloroplast ribosomes of higher plants consist of a small (30S) and a large (50S) subunit. The 30S small subunit contains 1 molecule of ribosomal RNA (16S rRNA) and 24 different proteins. The 50S large subunit contains 3 rRNA molecules (23S, 5S and 4.5S rRNA) and 33 different proteins.

The protein localises to the plastid. It is found in the chloroplast. In terms of biological role, component of the chloroplast ribosome (chloro-ribosome), a dedicated translation machinery responsible for the synthesis of chloroplast genome-encoded proteins, including proteins of the transcription and translation machinery and components of the photosynthetic apparatus. The polypeptide is Large ribosomal subunit protein bL34c (RPL34) (Spinacia oleracea (Spinach)).